The sequence spans 124 residues: Outer dense fiber protein 2 (124 aa).

A coiled-coil region spans residues 13–124 (KEDSERLMEQ…EAIMEQLKEL (112 aa)).

This sequence belongs to the ODF2 family. Self-associates. Associates with microtubules and forms a fibrillar structure partially linked to the microtubule network. Interacts through its C-terminus with PLK1. Interacts with ODF1. Interacts with MARK4; the interaction is required for localization of ODF2 to centrioles. Interacts with TSSK4. Interacts with AKNA. Interacts with QRICH2. Interacts with CFAP58. Interacts with BBOF1. Interacts with CCDC38. Interacts with CCDC42. Tyrosine phosphorylated. In terms of tissue distribution, detected in sperm flagella (at protein level).

Its subcellular location is the cytoplasm. It is found in the cytoskeleton. The protein resides in the microtubule organizing center. The protein localises to the centrosome. It localises to the cell projection. Its subcellular location is the cilium. It is found in the centriole. The protein resides in the spindle pole. The protein localises to the flagellum. Functionally, seems to be a major component of sperm tail outer dense fibers (ODF). ODFs are filamentous structures located on the outside of the axoneme in the midpiece and principal piece of the mammalian sperm tail and may help to maintain the passive elastic structures and elastic recoil of the sperm tail. May have a modulating influence on sperm motility. Functions as a general scaffold protein that is specifically localized at the distal/subdistal appendages of mother centrioles. Component of the centrosome matrix required for the localization of PLK1 and NIN to the centrosomes. Required for the formation and/or maintenance of normal CETN1 assembly. The polypeptide is Outer dense fiber protein 2 (Mesocricetus auratus (Golden hamster)).